Consider the following 105-residue polypeptide: Intracellular chorismate mutase (105 aa).

The Chorismate mutase domain maps to 23 to 105; that stretch reads SQPVPEIDTL…LRLGRGRLGH (83 aa). Chorismate is bound by residues R61, V70, and E74.

In terms of assembly, homodimer. Interacts with AroG.

It localises to the cytoplasm. It catalyses the reaction chorismate = prephenate. It functions in the pathway metabolic intermediate biosynthesis; prephenate biosynthesis; prephenate from chorismate: step 1/1. The formation of the complex with AroG activates the chorismate mutase activity. In terms of biological role, catalyzes the Claisen rearrangement of chorismate to prephenate. Probably involved in the aromatic amino acid biosynthesis. The polypeptide is Intracellular chorismate mutase (Mycobacterium bovis (strain ATCC BAA-935 / AF2122/97)).